A 597-amino-acid polypeptide reads, in one-letter code: K(+) efflux antiporter 6 (597 aa).

An N-terminal signal peptide occupies residues 1 to 35 (MVEGRRRRRFSLSSQQLALLLLLLSFFLCFSVASP). 12 helical membrane passes run 177 to 197 (LISD…AFAC), 201 to 221 (PVIT…LNFI), 224 to 244 (MVQV…ALGL), 257 to 277 (VAVL…GITV), 287 to 307 (GVFV…KFLM), 321 to 341 (IGIL…LPVL), 351 to 371 (MLSI…LSIL), 396 to 416 (LAAV…GLSL), 440 to 460 (IEPI…MLVN), 461 to 481 (VHFL…VIII), 499 to 519 (TALL…VLLS), and 543 to 563 (LVTT…GILL).

This sequence belongs to the monovalent cation:proton antiporter 2 (CPA2) transporter (TC 2.A.37) family. KEA (TC 2.A.37.1) subfamily. As to expression, expressed in roots, stems, leaves, flowers and silique.

The protein localises to the golgi apparatus membrane. It localises to the golgi apparatus. Its subcellular location is the trans-Golgi network membrane. It is found in the prevacuolar compartment membrane. The protein resides in the endomembrane system. The catalysed reaction is K(+)(in) + H(+)(out) = K(+)(out) + H(+)(in). Its function is as follows. Electroneutral K(+)/H(+) efflux antiporter involved in K(+) homeostasis and osmotic adjustment. Together with KEA4 and KEA5, promotes growth and development, and facilitates endosomal pH and ions homeostasis, as well as salt tolerance (e.g. K(+), NaCl and LiCl), probably by supporting cell wall biosynthesis during rapid etiolated seedling growth. The sequence is that of K(+) efflux antiporter 6 from Arabidopsis thaliana (Mouse-ear cress).